A 297-amino-acid polypeptide reads, in one-letter code: Glycerol-3-phosphate dehydrogenase [NAD(P)+] (297 aa).

3 residues coordinate NADPH: W11, R33, and K79. Residues K79, G107, and S109 each contribute to the sn-glycerol 3-phosphate site. A111 provides a ligand contact to NADPH. Sn-glycerol 3-phosphate-binding residues include K161, D214, S224, R225, and N226. The Proton acceptor role is filled by K161. R225 lines the NADPH pocket. NADPH-binding residues include V249 and E251.

Belongs to the NAD-dependent glycerol-3-phosphate dehydrogenase family.

Its subcellular location is the cytoplasm. It catalyses the reaction sn-glycerol 3-phosphate + NAD(+) = dihydroxyacetone phosphate + NADH + H(+). The enzyme catalyses sn-glycerol 3-phosphate + NADP(+) = dihydroxyacetone phosphate + NADPH + H(+). The protein operates within membrane lipid metabolism; glycerophospholipid metabolism. In terms of biological role, catalyzes the reduction of the glycolytic intermediate dihydroxyacetone phosphate (DHAP) to sn-glycerol 3-phosphate (G3P), the key precursor for phospholipid synthesis. In Campylobacter jejuni subsp. jejuni serotype O:6 (strain 81116 / NCTC 11828), this protein is Glycerol-3-phosphate dehydrogenase [NAD(P)+].